Consider the following 169-residue polypeptide: Protein-export protein SecB (169 aa).

The protein belongs to the SecB family. As to quaternary structure, homotetramer, a dimer of dimers. One homotetramer interacts with 1 SecA dimer.

The protein localises to the cytoplasm. Its function is as follows. One of the proteins required for the normal export of preproteins out of the cell cytoplasm. It is a molecular chaperone that binds to a subset of precursor proteins, maintaining them in a translocation-competent state. It also specifically binds to its receptor SecA. This Haemophilus influenzae (strain PittEE) protein is Protein-export protein SecB.